We begin with the raw amino-acid sequence, 400 residues long: MGKDIKKVVLAYSGGLDTSVILKWLVETYQCEVVAFSADIGQGEELEPVRGKAEASGACAVYIDDLREEFVKDYVFPAFRANAIYEGQYLLGTSLARPLISKRQMEIAKLEGADAVSHGATGKGNDQVRFELSYLAIDPAIKIIAPWREWDLNSRTKLMAYAEKHGIPVPTTQAKPYSSDRNLLHISFEGGVLEDPWAPPEEDMFVMSVSPQQAPDQPEEVLIQFEQGNPVAVNGEKLSPANLLAKLNELGGKHGVGRMDIVENRFVGMKSRGVYETPGGTILRIAHMNMETLTMDREVAHLRDSLIPKYAELVYNGFWFSPEMKLLQTTIDATQENVCGEVLLELYKGNCRVLGRRSDKSLYRMDFATFEEDEVYRQKDAEGFIRLNSLRLRIQSMMNK.

ATP is bound by residues Ala11–Ser19 and Ala38. Residues Tyr89 and Ser94 each contribute to the L-citrulline site. Gly119 lines the ATP pocket. L-aspartate-binding residues include Thr121, Asn125, and Asp126. L-citrulline is bound at residue Asn125. Positions 129, 178, 187, 263, and 275 each coordinate L-citrulline.

The protein belongs to the argininosuccinate synthase family. Type 1 subfamily. As to quaternary structure, homotetramer.

The protein resides in the cytoplasm. It carries out the reaction L-citrulline + L-aspartate + ATP = 2-(N(omega)-L-arginino)succinate + AMP + diphosphate + H(+). It participates in amino-acid biosynthesis; L-arginine biosynthesis; L-arginine from L-ornithine and carbamoyl phosphate: step 2/3. The polypeptide is Argininosuccinate synthase (Desulfatibacillum aliphaticivorans).